A 127-amino-acid chain; its full sequence is uncharacterized protein (127 aa).

Residues 1-23 form the signal peptide; the sequence is MSKPLKFLLWSSLALLLLQIGSG.

This is an uncharacterized protein from Arabidopsis thaliana (Mouse-ear cress).